A 106-amino-acid chain; its full sequence is Large ribosomal subunit protein eL42 (106 aa).

The tract at residues 26-53 is disordered; it reads YKKGKDSLYAQGKRRYDRKQSGYGGQTK.

The protein belongs to the eukaryotic ribosomal protein eL42 family. In terms of assembly, component of the large ribosomal subunit.

The protein resides in the cytoplasm. Component of the large ribosomal subunit. The ribosome is a large ribonucleoprotein complex responsible for the synthesis of proteins in the cell. This Danio rerio (Zebrafish) protein is Large ribosomal subunit protein eL42 (rpl36a).